Reading from the N-terminus, the 938-residue chain is AP-2 complex subunit alpha-2 (938 aa).

A 1,2-diacyl-sn-glycero-3-phospho-(1D-myo-inositol-3,4,5-trisphosphate)-binding positions include 11–12 (RG), K43, Y53, and 57–61 (KYVCK). The disordered stretch occupies residues 616–677 (LKKKKGPSTV…APPVPAGPPP (62 aa)). Residues 645-668 (PALASTSAVSTPSPSADLLGLGAA) are compositionally biased toward low complexity.

The protein belongs to the adaptor complexes large subunit family. As to quaternary structure, adaptor protein complex 2 (AP-2) is a heterotetramer composed of two large adaptins (alpha-type subunit AP2A1 or AP2A2 and beta-type subunit AP2B1), a medium adaptin (mu-type subunit AP2M1) and a small adaptin (sigma-type subunit AP2S1). Binds clathrin. Binds EPN1, EPS15, AMPH, SNAP91 and BIN1. Interacts with HIP1. Interacts with DGKD. Interacts with DENND1A, DENND1B and DENND1C. Interacts with FCHO1. Interacts with ATAT1; this interaction is required for efficient alpha-tubulin acetylation by ATAT1. Interacts with KIAA1107. Together with AP2B1 and AP2M1, it interacts with ADAM10; this interaction facilitates ADAM10 endocytosis from the plasma membrane during long-term potentiation in hippocampal neurons. Interacts with CLN3 (via dileucine motif). Interacts with ABCB11; this interaction regulates cell membrane expression of ABCB11 through its internalization in a clathrin-dependent manner and its subsequent degradation. Interacts with DNAJC6.

The protein resides in the cell membrane. Its subcellular location is the membrane. It is found in the coated pit. Component of the adaptor protein complex 2 (AP-2). Adaptor protein complexes function in protein transport via transport vesicles in different membrane traffic pathways. Adaptor protein complexes are vesicle coat components and appear to be involved in cargo selection and vesicle formation. AP-2 is involved in clathrin-dependent endocytosis in which cargo proteins are incorporated into vesicles surrounded by clathrin (clathrin-coated vesicles, CCVs) which are destined for fusion with the early endosome. The clathrin lattice serves as a mechanical scaffold but is itself unable to bind directly to membrane components. Clathrin-associated adaptor protein (AP) complexes which can bind directly to both the clathrin lattice and to the lipid and protein components of membranes are considered to be the major clathrin adaptors contributing the CCV formation. AP-2 also serves as a cargo receptor to selectively sort the membrane proteins involved in receptor-mediated endocytosis. AP-2 seems to play a role in the recycling of synaptic vesicle membranes from the presynaptic surface. AP-2 recognizes Y-X-X-[FILMV] (Y-X-X-Phi) and [ED]-X-X-X-L-[LI] endocytosis signal motifs within the cytosolic tails of transmembrane cargo molecules. AP-2 may also play a role in maintaining normal post-endocytic trafficking through the ARF6-regulated, non-clathrin pathway. During long-term potentiation in hippocampal neurons, AP-2 is responsible for the endocytosis of ADAM10. The AP-2 alpha subunit binds polyphosphoinositide-containing lipids, positioning AP-2 on the membrane. The AP-2 alpha subunit acts via its C-terminal appendage domain as a scaffolding platform for endocytic accessory proteins. The AP-2 alpha and AP-2 sigma subunits are thought to contribute to the recognition of the [ED]-X-X-X-L-[LI] motif. The protein is AP-2 complex subunit alpha-2 of Bos taurus (Bovine).